We begin with the raw amino-acid sequence, 298 residues long: tRNA pseudouridine synthase B (298 aa).

Asp-39 (nucleophile) is an active-site residue.

The protein belongs to the pseudouridine synthase TruB family. Type 1 subfamily.

The enzyme catalyses uridine(55) in tRNA = pseudouridine(55) in tRNA. In terms of biological role, responsible for synthesis of pseudouridine from uracil-55 in the psi GC loop of transfer RNAs. This chain is tRNA pseudouridine synthase B, found in Lactobacillus delbrueckii subsp. bulgaricus (strain ATCC BAA-365 / Lb-18).